The sequence spans 401 residues: S-adenosylmethionine synthase (401 aa).

Residue His15 participates in ATP binding. Asp17 contacts Mg(2+). Glu48 is a K(+) binding site. 2 residues coordinate L-methionine: Glu61 and Gln104. The flexible loop stretch occupies residues 104–114 (QSPDIALGVDR). ATP contacts are provided by residues 179–181 (DGK), 246–247 (RF), Asp255, 261–262 (RK), Ala278, and Lys282. Asp255 serves as a coordination point for L-methionine. Lys286 is an L-methionine binding site.

Belongs to the AdoMet synthase family. Homotetramer; dimer of dimers. Mg(2+) serves as cofactor. Requires K(+) as cofactor.

The protein localises to the cytoplasm. The catalysed reaction is L-methionine + ATP + H2O = S-adenosyl-L-methionine + phosphate + diphosphate. Its pathway is amino-acid biosynthesis; S-adenosyl-L-methionine biosynthesis; S-adenosyl-L-methionine from L-methionine: step 1/1. In terms of biological role, catalyzes the formation of S-adenosylmethionine (AdoMet) from methionine and ATP. The overall synthetic reaction is composed of two sequential steps, AdoMet formation and the subsequent tripolyphosphate hydrolysis which occurs prior to release of AdoMet from the enzyme. The polypeptide is S-adenosylmethionine synthase (Petrotoga mobilis (strain DSM 10674 / SJ95)).